Here is a 304-residue protein sequence, read N- to C-terminus: Methionyl-tRNA formyltransferase (304 aa).

Residue 111–114 (SLLP) participates in (6S)-5,6,7,8-tetrahydrofolate binding.

Belongs to the Fmt family.

It carries out the reaction L-methionyl-tRNA(fMet) + (6R)-10-formyltetrahydrofolate = N-formyl-L-methionyl-tRNA(fMet) + (6S)-5,6,7,8-tetrahydrofolate + H(+). Its function is as follows. Attaches a formyl group to the free amino group of methionyl-tRNA(fMet). The formyl group appears to play a dual role in the initiator identity of N-formylmethionyl-tRNA by promoting its recognition by IF2 and preventing the misappropriation of this tRNA by the elongation apparatus. This Campylobacter fetus subsp. fetus (strain 82-40) protein is Methionyl-tRNA formyltransferase.